The primary structure comprises 398 residues: Acetyl-CoA acetyltransferase (398 aa).

N-acetylserine is present on Ser-2. Residue Cys-91 is the Acyl-thioester intermediate of the active site. CoA-binding residues include Tyr-186 and Lys-231. Tyr-186 is a K(+) binding site. The K(+) site is built by Ala-248, Ala-249, and Ala-251. Position 252 (Ser-252) interacts with CoA. K(+) is bound at residue Val-350. Residues His-354 and Cys-384 each act as proton acceptor in the active site.

Belongs to the thiolase-like superfamily. Thiolase family. In terms of assembly, homotetramer.

It localises to the cytoplasm. It carries out the reaction 2 acetyl-CoA = acetoacetyl-CoA + CoA. The protein operates within metabolic intermediate biosynthesis; (R)-mevalonate biosynthesis; (R)-mevalonate from acetyl-CoA: step 1/3. Its function is as follows. Acetyl-CoA acetyltransferase; part of the first module of ergosterol biosynthesis pathway that includes the early steps of the pathway, conserved across all eukaryotes, and which results in the formation of mevalonate from acetyl-coenzyme A (acetyl-CoA). In this module, the acetyl-CoA acetyltransferase ERG10 catalyzes the formation of acetoacetyl-CoA. The hydroxymethylglutaryl-CoA synthase ERG13 then condenses acetyl-CoA with acetoacetyl-CoA to form HMG-CoA. The rate-limiting step of the early module is the reduction to mevalonate by the 3-hydroxy-3-methylglutaryl-coenzyme A (HMG-CoA) reductases HMG1 and HMG2 which are derived from a single ancestral HMGR gene by gene duplication. In Saccharomyces pastorianus (strain ATCC 76670 / Carlsberg bottom yeast no.2 / CBS 1503 / CLIB 180 / NBRC 10610 / NRRL Y-1525) (Saaz-type lager yeast), this protein is Acetyl-CoA acetyltransferase.